The following is a 74-amino-acid chain: Small cysteine-rich protein 8 (74 aa).

The N-terminal stretch at 1 to 21 (MAAKFHLCLLLIILGTITVQG) is a signal peptide. The propeptide occupies 22 to 31 (ARHPGKPHFF).

This sequence belongs to the Cnidaria small cysteine-rich protein (SCRiP) family. beta subfamily. In terms of processing, contains 4 disulfide bonds.

It localises to the secreted. It is found in the nematocyst. Induces neurotoxic symptoms on zebrafish. Has also been claimed to be implied in calcification, but tests on homolog proteins suggest that proteins of this family have a neurotoxic function and not a calcification function. The sequence is that of Small cysteine-rich protein 8 from Orbicella faveolata (Mountainous star coral).